The sequence spans 969 residues: RNA polymerase-associated protein RapA (969 aa).

The 171-residue stretch at 164-334 folds into the Helicase ATP-binding domain; the sequence is EVGRRHAPRV…FARLRLLDPD (171 aa). 177-184 provides a ligand contact to ATP; the sequence is DEVGLGKT. A DEAH box motif is present at residues 280-283; it reads DEAH. A Helicase C-terminal domain is found at 492–646; it reads RVNWLLEKVK…TCPTGRAVYD (155 aa).

The protein belongs to the SNF2/RAD54 helicase family. RapA subfamily. In terms of assembly, interacts with the RNAP. Has a higher affinity for the core RNAP than for the holoenzyme. Its ATPase activity is stimulated by binding to RNAP.

Its function is as follows. Transcription regulator that activates transcription by stimulating RNA polymerase (RNAP) recycling in case of stress conditions such as supercoiled DNA or high salt concentrations. Probably acts by releasing the RNAP, when it is trapped or immobilized on tightly supercoiled DNA. Does not activate transcription on linear DNA. Probably not involved in DNA repair. The chain is RNA polymerase-associated protein RapA from Vibrio campbellii (strain ATCC BAA-1116).